Consider the following 928-residue polypeptide: Zinc metalloproteinase nas-39 (928 aa).

Residues 1 to 30 form the signal peptide; that stretch reads MRFSANIAIIVNIIFLFIVVEFVLPTFIRS. One can recognise a Peptidase M12A domain in the interval 48-247; that stretch reads AATAKKERIW…RQTKKLYKCA (200 aa). 2 N-linked (GlcNAc...) asparagine glycosylation sites follow: Asn69 and Asn87. 4 disulfides stabilise this stretch: Cys90–Cys246, Cys111–Cys133, Cys113–Cys114, and Cys249–Cys268. Position 141 (His141) interacts with Zn(2+). The active site involves Glu142. Zn(2+)-binding residues include His145 and His151. 2 consecutive CUB domains span residues 249–359 and 360–476; these read CGGT…YAIC and GGPI…FTKE. An N-linked (GlcNAc...) asparagine glycan is attached at Asn283. Disulfide bonds link Cys359/Cys385, Cys412/Cys439, Cys480/Cys491, Cys487/Cys500, Cys502/Cys515, and Cys519/Cys545. The EGF-like 1; calcium-binding domain maps to 477-516; that stretch reads LNECATDKNICHHYCVNTVGGFKCACRVGYSLSSNGFSCD. The 107-residue stretch at 519–625 folds into the CUB 3 domain; the sequence is CGGYLKASNG…DGFFANFIAD (107 aa). Residues Asn527 and Asn560 are each glycosylated (N-linked (GlcNAc...) asparagine). Intrachain disulfides connect Cys573–Cys587, Cys629–Cys640, Cys636–Cys649, Cys651–Cys664, Cys669–Cys695, Cys722–Cys744, Cys782–Cys812, and Cys840–Cys863. Residues 626-665 form the EGF-like 2; calcium-binding domain; that stretch reads FDECQNDNAGCEHTCQNRLGSYVCTCNPGYILAEDKHNCK. 2 consecutive CUB domains span residues 669–781 and 782–900; these read CFFE…YTSL and CGGR…YREA. Asn694 carries N-linked (GlcNAc...) asparagine glycosylation. The tract at residues 895 to 928 is disordered; sequence AEYREAPRSSSTKRTFVSKTRHSPLEEPIHDRNE. Residues 902-912 are compositionally biased toward polar residues; it reads RSSSTKRTFVS. A compositionally biased stretch (basic and acidic residues) spans 917-928; the sequence is SPLEEPIHDRNE.

Zn(2+) is required as a cofactor. Expressed in pharyngeal, vulva and body wall muscles, intestine and several neurons.

The protein resides in the secreted. Its function is as follows. Metalloprotease. The sequence is that of Zinc metalloproteinase nas-39 from Caenorhabditis elegans.